The sequence spans 257 residues: Membrane protein insertase YidC 1 (257 aa).

The first 20 residues, 1 to 20 (MYRKFGMAAMLVSILLLMTG), serve as a signal peptide directing secretion. Residue C21 is the site of N-palmitoyl cysteine attachment. C21 carries S-diacylglycerol cysteine lipidation. 5 helical membrane passes run 35–55 (IWDS…ANAF), 59–79 (FGLA…PLMI), 129–149 (LAGC…YHAI), 160–180 (FLWF…AGIT), and 205–225 (VMIL…WVIG).

The protein belongs to the OXA1/ALB3/YidC family. Type 2 subfamily.

The protein localises to the cell membrane. Its function is as follows. Required for the insertion and/or proper folding and/or complex formation of integral membrane proteins into the membrane. Involved in integration of membrane proteins that insert both dependently and independently of the Sec translocase complex, as well as at least some lipoproteins. The protein is Membrane protein insertase YidC 1 of Halalkalibacterium halodurans (strain ATCC BAA-125 / DSM 18197 / FERM 7344 / JCM 9153 / C-125) (Bacillus halodurans).